The sequence spans 348 residues: Alternative squalene epoxidase (348 aa).

The segment covering 1 to 10 (MLVDRVENNE) has biased composition (basic and acidic residues). The interval 1–26 (MLVDRVENNEKQQQQMASSSDAMSDS) is disordered. The segment covering 12 to 26 (QQQQMASSSDAMSDS) has biased composition (low complexity). A run of 3 helical transmembrane segments spans residues 55–75 (AIAW…LLLS), 105–125 (LGLV…WIFF), and 153–173 (GLLT…YLAI). In terms of domain architecture, Fatty acid hydroxylase spans 197–332 (FMCLVLQDGI…FMWFDQLGGT (136 aa)). A Histidine box-1 motif is present at residues 211–215 (HVLEH). The Histidine box-2 signature appears at 226–230 (HKPHH). A run of 2 helical transmembrane segments spans residues 243-263 (GSLM…ANLV) and 277-297 (SYAC…DGIF). Residues 308 to 312 (HHVHH) carry the Histidine box-3 motif.

Belongs to the sterol desaturase family. In terms of assembly, interacts with cytochrome b5/PHATRDRAFT_30770. Fe cation is required as a cofactor.

The protein localises to the endoplasmic reticulum membrane. The catalysed reaction is squalene + 2 Fe(II)-[cytochrome b5] + O2 + 2 H(+) = (S)-2,3-epoxysqualene + 2 Fe(III)-[cytochrome b5] + H2O. It functions in the pathway terpene metabolism; lanosterol biosynthesis; lanosterol from farnesyl diphosphate. With respect to regulation, the activity of this enzyme is not inhibited by terbinafine, an established inhibitor of the conventional flavoprotein squalene epoxidase. Functionally, catalyzes the stereospecific epoxidation of squalene at the terminal double bond to form (S)-2,3-epoxysqualene, the first oxygenation step in sterol biosynthesis. In Phaeodactylum tricornutum (strain CCAP 1055/1), this protein is Alternative squalene epoxidase.